Consider the following 114-residue polypeptide: TYRO protein tyrosine kinase-binding protein (114 aa).

An N-terminal signal peptide occupies residues 1–21; the sequence is MGALEPSWCLLFLPVLLTVGG. At 22–42 the chain is on the extracellular side; that stretch reads LSPVQAQSDTFPRCDCSSVSP. The chain crosses the membrane as a helical span at residues 43-63; that stretch reads GVLAGIVLGDLVLTLLIALAV. Asp-52 is a binding site for Ca(2+). Residues 64–114 lie on the Cytoplasmic side of the membrane; it reads YSLGRLVSRGQGTAEGTRKQHIAETESPYQELQGQRPEVYSDLNTQRQYYR. The interval 74–107 is disordered; sequence QGTAEGTRKQHIAETESPYQELQGQRPEVYSDLN. In terms of domain architecture, ITAM spans 81 to 109; the sequence is RKQHIAETESPYQELQGQRPEVYSDLNTQ. Phosphotyrosine occurs at positions 92 and 103.

The protein belongs to the TYROBP family. Homodimer; disulfide-linked. Homotrimer; disulfide-linked. Homotetramer; disulfide-linked. Homotrimers and homotetramers form when low levels of partner receptors are available and are competitive with assembly with interacting receptors. They may represent alternative oligomerization states or may be intermediates in the receptor assembly process. Binding of a metal cation aids in homooligomerization through coordination of the metal ion by the subunits of the oligomer. Interacts with TREM1. Interacts with TREM2. Interacts with TREM3. Interacts with CLECSF5. Interacts with CD300LB and CD300C2. Interacts with CD300E. Interacts (via ITAM domain) with SYK (via SH2 domains); activates SYK mediating neutrophil and macrophage integrin-mediated activation. Interacts (via transmembrane domain) with KLRK1 isoform 2 (via transmembrane domain); the interaction is required for KLRK1 NK cell surface expression and NK cell-mediated cytotoxicity. Interacts with KLRC2. Interacts with CD300H. Interacts with KLRD1. Interacts with KLRA4 and KLRA8. Post-translationally, tyrosine phosphorylated. Following ligand binding by associated receptors, tyrosine phosphorylated in the ITAM domain which leads to activation of additional tyrosine kinases and subsequent cell activation. In terms of tissue distribution, expressed on microglia (at protein level). Expressed on oligodendrocytes (at protein level). Expressed on macrophages and osteoclasts. Expressed on dendritic cells in liver, spleen, kidney and lung with highest levels in liver dendritic cells.

It localises to the cell membrane. In terms of biological role, adapter protein which non-covalently associates with activating receptors found on the surface of a variety of immune cells to mediate signaling and cell activation following ligand binding by the receptors. TYROBP is tyrosine-phosphorylated in the ITAM domain following ligand binding by the associated receptors which leads to activation of additional tyrosine kinases and subsequent cell activation. Also has an inhibitory role in some cells. Non-covalently associates with activating receptors of the CD300 family to mediate cell activation. Also mediates cell activation through association with activating receptors of the CD200R family. Required for neutrophil activation mediated by integrin. Required for the activation of myeloid cells mediated by the CLEC5A/MDL1 receptor. Associates with natural killer (NK) cell receptors such as the KLRD1/KLRC2 heterodimer to mediate NK cell activation. Also associates non-covalently with the NK cell receptors KLRA4/LY49D and KLRA8/LY49H which leads to NK cell activation. Associates with TREM1 to mediate activation of neutrophils and monocytes. Associates with TREM2 on monocyte-derived dendritic cells to mediate up-regulation of chemokine receptor CCR7 and dendritic cell maturation and survival. Association with TREM2 mediates cytokine-induced formation of multinucleated giant cells which are formed by the fusion of macrophages. Stabilizes the TREM2 C-terminal fragment (TREM2-CTF) which is produced by TREM2 ectodomain shedding. In microglia, required with TREM2 for phagocytosis of apoptotic neurons. Required with ITGAM/CD11B in microglia to control production of microglial superoxide ions which promote the neuronal apoptosis that occurs during brain development. Promotes pro-inflammatory responses in microglia following nerve injury which accelerates degeneration of injured neurons. Positively regulates the expression of the IRAK3/IRAK-M kinase and IL10 production by liver dendritic cells and inhibits their T cell allostimulatory ability. Negatively regulates B cell proliferation. Required for CSF1-mediated osteoclast cytoskeletal organization. Positively regulates multinucleation during osteoclast development. This chain is TYRO protein tyrosine kinase-binding protein, found in Mus musculus (Mouse).